The sequence spans 853 residues: MSAIENFDAHTPMMQQYLKLKAQHPEILLFYRMGDFYELFYDDAKRASQLLDISLTKRGASAGEPIPMAGIPYHAVENYLAKLVNQGESVAICEQIGDPATSKGPVERKVVRIVTPGTISDEALLQERQDNLLAAIWQDSKGFGYATLDISSGRFRLSEPADRETMAAELQRSNPAELLYAEDFAEMSLIEGRRGLRRRPLWEFEIDTARQQLNLQFGTRDLVGFGVENAPRGLCAAGCLLQYAKDTQRTTLPHIRSITMEREQDSIIMDAATRRNLEITQNLAGGAENTLASVLDCTVTPMGSRMLKRWLHMPVRDTRVLLERQQTIGALQDFTAELQPVLRQVGDLERILARLALRTARPRDLARMRHAFQQLPELRAQLETVDSAPVQALREKMGEFAELRDLLERAIIDTPPVLVRDGGVIASGYNEELDEWRALADGATDYLERLEVRERERTGLDTLKVGFNAVHGYYIQISRGQSHLAPINYMRRQTLKNAERYIIPELKEYEDKVLTSKGKALALEKQLYEELFDLLLPHLEALQQSASALAELDVLVNLAERAYTLNYTCPTFIDKPGIRITEGRHPVVEQVLNEPFIANPLNLSPQRRMLIITGPNMGGKSTYMRQTALIALMAYIGSYVPAQKVEIGPIDRIFTRVGAADDLASGRSTFMVEMTETANILHNATEYSLVLMDEIGRGTSTYDGLSLAWACAENLANKIKALTLFATHYFELTQLPEKMEGVANVHLDALEHGDTIAFMHSVQDGAASKSYGLAVAALAGVPKEVIKRARQKLRELESISPNAAATQVDGTQMSLLSVPEETSPAVEALENLDPDSLTPRQALEWIYRLKSLV.

614-621 (GPNMGGKS) provides a ligand contact to ATP.

The protein belongs to the DNA mismatch repair MutS family.

This protein is involved in the repair of mismatches in DNA. It is possible that it carries out the mismatch recognition step. This protein has a weak ATPase activity. This is DNA mismatch repair protein MutS from Shigella flexneri serotype 5b (strain 8401).